The following is a 202-amino-acid chain: Protein lin-28 homolog A (202 aa).

The tract at residues 1–31 is disordered; it reads MGSVSNQQFAGAKPGEEPSGDSPKAENESQP. Residues 33–106 enclose the CSD domain; sequence HGSGICKWFN…GLESIRVTGP (74 aa). Residues 107-130 are flexible linker; that stretch reads GGVFCIGSERRPKSKSLQKRRSKG. 2 consecutive CCHC-type zinc fingers follow at residues 131-148 and 153-170; these read DRCY…ECKL and KKCH…NCPA. Residues cysteine 133, cysteine 136, histidine 141, cysteine 146, cysteine 155, cysteine 158, histidine 163, and cysteine 168 each coordinate Zn(2+). A disordered region spans residues 169–202; it reads PAKAQQSPSSQGKPAYFREKEDMHSSALLPETRE.

The protein belongs to the lin-28 family. Monomer.

It localises to the cytoplasm. The protein resides in the rough endoplasmic reticulum. Its subcellular location is the P-body. It is found in the stress granule. The protein localises to the nucleus. It localises to the nucleolus. Functionally, RNA-binding protein that inhibits processing of pre-let-7 miRNAs and regulates translation of mRNAs that control developmental timing, pluripotency and metabolism. Seems to recognize a common structural G-quartet (G4) feature in its miRNA and mRNA targets. 'Translational enhancer' that drives specific mRNAs to polysomes and increases the efficiency of protein synthesis. Its association with the translational machinery and target mRNAs results in an increased number of initiation events per molecule of mRNA and, indirectly, in mRNA stabilization. Suppressor of microRNA (miRNA) biogenesis, including that of let-7. Binds specific target miRNA precursors (pre-miRNAs), recognizing an 5'-GGAG-3' motif found in their terminal loop, and recruits uridylyltransferase. This results in the terminal uridylation of target pre-miRNAs. Uridylated pre-miRNAs fail to be processed by Dicer and undergo degradation. Localized to the periendoplasmic reticulum area, binds to a large number of spliced mRNAs and inhibits the translation of mRNAs destined for the ER, reducing the synthesis of transmembrane proteins, ER or Golgi lumen proteins, and secretory proteins. Binds to and enhances the translation of mRNAs for several metabolic enzymes, increasing glycolysis and oxidative phosphorylation. Which, with the let-7 repression may enhance tissue repair in adult tissue. The sequence is that of Protein lin-28 homolog A (LIN28A) from Gallus gallus (Chicken).